The sequence spans 410 residues: Lissencephaly-1 homolog A (410 aa).

The region spanning 7-39 is the LisH domain; the sequence is QRDELNRAIADYLRSNGYEEAYSVFKKEAELDM. The stretch at 56–83 forms a coiled coil; sequence TSVIRLQKKVMELESKLNEAKEEINIGG. WD repeat units lie at residues 106 to 145, 148 to 187, 190 to 229, 232 to 271, 274 to 333, 336 to 375, and 378 to 410; these read GHRS…FERT, GHTD…CIRT, GHDH…CVKT, GHRE…CKAE, EHEH…CLMT, GHDN…CTKT, and AHEH…WECR.

This sequence belongs to the WD repeat LIS1/nudF family. Can self-associate. Component of the cytosolic PAF-AH (I) heterotetrameric enzyme, which is composed of PAFAH1B1 (beta), PAFAH1B2 (alpha2) and PAFAH1B3 (alpha1) subunits. The catalytic activity of the enzyme resides in the alpha1 (PAFAH1B3) and alpha2 (PAFAH1B2) subunits, whereas the beta subunit (PAFAH1B1) has regulatory activity. Trimer formation is not essential for the catalytic activity. Interacts with dynein, dynactin, nde1 and ndel1.

Its subcellular location is the cytoplasm. The protein resides in the cytoskeleton. The protein localises to the microtubule organizing center. It localises to the centrosome. In terms of biological role, regulatory subunit (beta subunit) of the cytosolic type I platelet-activating factor (PAF) acetylhydrolase (PAF-AH (I)), an enzyme that catalyzes the hydrolyze of the acetyl group at the sn-2 position of PAF and its analogs and participates in PAF inactivation. Regulates the PAF-AH (I) activity in a catalytic dimer composition-dependent manner. Positively regulates the activity of the minus-end directed microtubule motor protein dynein. May enhance dynein-mediated microtubule sliding by targeting dynein to the microtubule plus end. Required for several dynein- and microtubule-dependent processes such as the maintenance of Golgi integrity, the peripheral transport of microtubule fragments and the coupling of the nucleus and centrosome. May be required for proliferation of neuronal precursors and neuronal migration. The protein is Lissencephaly-1 homolog A (pafah1b1a) of Danio rerio (Zebrafish).